Reading from the N-terminus, the 213-residue chain is Large ribosomal subunit protein uL1 (213 aa).

It belongs to the universal ribosomal protein uL1 family. As to quaternary structure, part of the 50S ribosomal subunit.

In terms of biological role, binds directly to 23S rRNA. Probably involved in E site tRNA release. Functionally, protein L1 is also a translational repressor protein, it controls the translation of its operon by binding to its mRNA. The polypeptide is Large ribosomal subunit protein uL1 (Methanoculleus marisnigri (strain ATCC 35101 / DSM 1498 / JR1)).